The primary structure comprises 415 residues: Diaminopimelate decarboxylase (415 aa).

K60 is subject to N6-(pyridoxal phosphate)lysine. Pyridoxal 5'-phosphate is bound by residues G239 and 273–276; that span reads EPGR. The substrate site is built by R276, R312, and Y316. C342 (proton donor) is an active-site residue. Substrate is bound by residues E343 and Y370. Position 370 (Y370) interacts with pyridoxal 5'-phosphate.

The protein belongs to the Orn/Lys/Arg decarboxylase class-II family. LysA subfamily. As to quaternary structure, homodimer. The cofactor is pyridoxal 5'-phosphate.

The enzyme catalyses meso-2,6-diaminopimelate + H(+) = L-lysine + CO2. It functions in the pathway amino-acid biosynthesis; L-lysine biosynthesis via DAP pathway; L-lysine from DL-2,6-diaminopimelate: step 1/1. Specifically catalyzes the decarboxylation of meso-diaminopimelate (meso-DAP) to L-lysine. This is Diaminopimelate decarboxylase from Pseudomonas aeruginosa (strain ATCC 15692 / DSM 22644 / CIP 104116 / JCM 14847 / LMG 12228 / 1C / PRS 101 / PAO1).